A 96-amino-acid chain; its full sequence is Large ribosomal subunit protein uL23 (96 aa).

The protein belongs to the universal ribosomal protein uL23 family. Part of the 50S ribosomal subunit. Contacts protein L29, and trigger factor when it is bound to the ribosome.

Functionally, one of the early assembly proteins it binds 23S rRNA. One of the proteins that surrounds the polypeptide exit tunnel on the outside of the ribosome. Forms the main docking site for trigger factor binding to the ribosome. This Clostridium novyi (strain NT) protein is Large ribosomal subunit protein uL23.